A 534-amino-acid polypeptide reads, in one-letter code: MKFDPQKYRELAEKDFEAAWKAGKEILAERSPNELYPRVGFSFGKEHPLFATIQRLREAYLSIGFSEVVNPLIVEDVHVKKQFGREALAVLDRCFYLATLPKPNVGISAEKIRQIEAITKREVDSKPLQEIFHRYKKGEIDGDDLSYLIAEVLDVDDITAVKILDEVFPEFKELKPISSTLTLRSHMTTGWFITLSHIADKLPLPIKLFSIDRCFRREQGEDATRLYTYFSASCVLVDEELSVDDGKAVAEALLRQFGFENFRFRKDEKRSKYYIPDTQTEVFAFHPKLVGSSTKYSDGWIEIATFGIYSPTALAEYDIPYPVMNLGLGVERLAMILYGYDDVRKMVYPQIHGEIKLSDLDIAREIKVKEVPQTAVGLKIAQSIVETAEKHASEPSPCSFLAFEGEMMGRNVRVYVVEEEENTKLCGPAYANEVVVYKGDIYGIPKTKKWRSFFEEGVPTGIRYIDGFAYYAARKVEEAAMREQEEVKVKARIVENLSDINLYIHENVRRYILWKKGKIDVRGPLFVTVKAEIE.

Residues 186–188 (HMT), 231–233 (SAS), 273–274 (YY), and Asn325 each bind substrate.

It belongs to the class-II aminoacyl-tRNA synthetase family. O-phosphoseryl-tRNA(Cys) synthetase subfamily. In terms of assembly, homotetramer. Interacts with SepCysS.

The catalysed reaction is tRNA(Cys) + O-phospho-L-serine + ATP = O-phospho-L-seryl-tRNA(Cys) + AMP + diphosphate. In terms of biological role, catalyzes the attachment of O-phosphoserine (Sep) to tRNA(Cys). The sequence is that of O-phosphoserine--tRNA(Cys) ligase (sepS) from Archaeoglobus fulgidus (strain ATCC 49558 / DSM 4304 / JCM 9628 / NBRC 100126 / VC-16).